Reading from the N-terminus, the 930-residue chain is Protocadherin gamma-B6 (930 aa).

Positions 1-30 (MGGSCAQRRRAGPRQVLFPLLLPFFYPTLC) are cleaved as a signal peptide. 6 Cadherin domains span residues 31-133 (EPIR…APQF), 134-242 (DKKE…PPVF), 243-347 (SRDE…SPEI), 348-452 (IITS…APVF), 453-562 (DQTS…APRV), and 570-675 (DGSA…LPDL). Residues 31-691 (EPIRYSIPEE…SDPQAELQFY (661 aa)) are Extracellular-facing. Asn-304, Asn-419, and Asn-545 each carry an N-linked (GlcNAc...) asparagine glycan. A helical membrane pass occupies residues 692–712 (LVVALALISVLFLLAVILAIA). The Cytoplasmic portion of the chain corresponds to 713-930 (LRLRRSLSPT…KKKSGKKEKK (218 aa)). 2 disordered regions span residues 791 to 839 (PHGG…WPNN) and 900 to 930 (ATLT…KEKK). A compositionally biased stretch (polar residues) spans 800–839 (HPETLTSQAPPNTDWRFSQAQRPGTSGSQNGDDTGTWPNN). Basic residues predominate over residues 920-930 (NKKKSGKKEKK).

Its subcellular location is the cell membrane. Functionally, potential calcium-dependent cell-adhesion protein. May be involved in the establishment and maintenance of specific neuronal connections in the brain. The protein is Protocadherin gamma-B6 (PCDHGB6) of Pan troglodytes (Chimpanzee).